The following is a 514-amino-acid chain: Extracellular exo-inulinase (514 aa).

Positions 1 to 18 are cleaved as a signal peptide; the sequence is MRAFLALIFLTFVMNVES. Substrate is bound by residues 33–34 and Q52; that span reads ND. D34 functions as the Nucleophile in the catalytic mechanism. N56 carries N-linked (GlcNAc...) asparagine glycosylation. Substrate contacts are provided by W60 and S95. N104 and N110 each carry an N-linked (GlcNAc...) asparagine glycan. Residue 162–163 participates in substrate binding; sequence RD. 2 N-linked (GlcNAc...) asparagine glycosylation sites follow: N197 and N203. Substrate-binding residues include E214 and W300. E214 acts as the Proton donor/acceptor in catalysis. N357, N371, N389, and N422 each carry an N-linked (GlcNAc...) asparagine glycan.

It belongs to the glycosyl hydrolase 32 family.

The protein localises to the secreted. It carries out the reaction Hydrolysis of terminal, non-reducing (2-&gt;1)- and (2-&gt;6)-linked beta-D-fructofuranose residues in fructans.. Its function is as follows. Exo-inulinase involved in utilization of the plant storage polymer inulin, consisting of fructooligosaccharides with a degree of polymerization (DP) value from 2 to 60. Splits off terminal fructose units successively from the non-reducing end of the inulin molecule. The chain is Extracellular exo-inulinase from Meyerozyma guilliermondii (strain ATCC 6260 / CBS 566 / DSM 6381 / JCM 1539 / NBRC 10279 / NRRL Y-324) (Yeast).